The primary structure comprises 238 residues: Probable xyloglucan-specific endo-beta-1,4-glucanase A (238 aa).

The N-terminal stretch at 1–18 (MKLSLSVALSLAASTAQA) is a signal peptide. N106 and N171 each carry an N-linked (GlcNAc...) asparagine glycan.

The protein belongs to the glycosyl hydrolase 12 (cellulase H) family.

The protein localises to the secreted. The catalysed reaction is xyloglucan + H2O = xyloglucan oligosaccharides.. Functionally, catalyzes endohydrolysis of 1,4-beta-D-glucosidic linkages in xyloglucan with retention of the beta-configuration of the glycosyl residues. Specific for xyloglucan and does not hydrolyze other cell wall components. The sequence is that of Probable xyloglucan-specific endo-beta-1,4-glucanase A (xgeA) from Aspergillus fumigatus (strain ATCC MYA-4609 / CBS 101355 / FGSC A1100 / Af293) (Neosartorya fumigata).